The primary structure comprises 106 residues: Thiosulfate sulfurtransferase GlpE (106 aa).

Residues 16–104 (REQGAVLVDV…WRTTYPQETV (89 aa)) enclose the Rhodanese domain. The Cysteine persulfide intermediate role is filled by Cys64.

The protein belongs to the GlpE family.

It localises to the cytoplasm. The catalysed reaction is thiosulfate + hydrogen cyanide = thiocyanate + sulfite + 2 H(+). It catalyses the reaction thiosulfate + [thioredoxin]-dithiol = [thioredoxin]-disulfide + hydrogen sulfide + sulfite + 2 H(+). In terms of biological role, transferase that catalyzes the transfer of sulfur from thiosulfate to thiophilic acceptors such as cyanide or dithiols. May function in a CysM-independent thiosulfate assimilation pathway by catalyzing the conversion of thiosulfate to sulfite, which can then be used for L-cysteine biosynthesis. The polypeptide is Thiosulfate sulfurtransferase GlpE (Pseudomonas syringae pv. syringae (strain B728a)).